Reading from the N-terminus, the 77-residue chain is EMBRYO SURROUNDING FACTOR 1-like protein 9 (77 aa).

The N-terminal stretch at 1 to 22 (MSSSRFLILCIILISFFPLHEC) is a signal peptide. 4 disulfide bridges follow: Cys-38-Cys-54, Cys-43-Cys-75, Cys-52-Cys-71, and Cys-55-Cys-64.

The protein belongs to the MEG family. As to expression, expressed in flowers.

The polypeptide is EMBRYO SURROUNDING FACTOR 1-like protein 9 (ESFL9) (Arabidopsis thaliana (Mouse-ear cress)).